The following is a 119-amino-acid chain: Large ribosomal subunit protein uL24 (119 aa).

It belongs to the universal ribosomal protein uL24 family. As to quaternary structure, part of the 50S ribosomal subunit.

In terms of biological role, one of two assembly initiator proteins, it binds directly to the 5'-end of the 23S rRNA, where it nucleates assembly of the 50S subunit. Functionally, one of the proteins that surrounds the polypeptide exit tunnel on the outside of the subunit. This Sulfurihydrogenibium sp. (strain YO3AOP1) protein is Large ribosomal subunit protein uL24.